We begin with the raw amino-acid sequence, 318 residues long: Ribonuclease Z (318 aa).

Zn(2+) is bound by residues His62, His64, Asp66, His67, His144, Asp215, and His273. Asp66 (proton acceptor) is an active-site residue.

Belongs to the RNase Z family. As to quaternary structure, homodimer. Zn(2+) serves as cofactor.

The catalysed reaction is Endonucleolytic cleavage of RNA, removing extra 3' nucleotides from tRNA precursor, generating 3' termini of tRNAs. A 3'-hydroxy group is left at the tRNA terminus and a 5'-phosphoryl group is left at the trailer molecule.. In terms of biological role, zinc phosphodiesterase, which displays some tRNA 3'-processing endonuclease activity. Probably involved in tRNA maturation, by removing a 3'-trailer from precursor tRNA. In Prochlorococcus marinus (strain MIT 9303), this protein is Ribonuclease Z.